The primary structure comprises 300 residues: MKIDLSRLVTESRNPASAEIDTLSTVEMLRVINQEDQKVALAVEAVLPHIAQAVDAITHAFAHGGRLIYMGAGTSGRLGILDASECPPTYGTPAELVVGLIAGGHTAILKAVENAEDNRELAQNDLKSLNLTANDVVVGIAASGRTPYVLGGLEYATLIGATTVSIACNPVCPMADAAQIAILPVVGPEVVTGSSRMKAGTAQKLVLNMLTSGAMIRSGKVFGNLMVDVEATNAKLIQRQTNIVVEATGVCAEEAEEALKACDRHCKTAILMILSGLDAEQAKTKLQQHNGFIRAALNDK.

The SIS domain occupies 57–220 (ITHAFAHGGR…TSGAMIRSGK (164 aa)). E85 acts as the Proton donor in catalysis. Residue E116 is part of the active site.

The protein belongs to the GCKR-like family. MurNAc-6-P etherase subfamily. As to quaternary structure, homodimer.

The catalysed reaction is N-acetyl-D-muramate 6-phosphate + H2O = N-acetyl-D-glucosamine 6-phosphate + (R)-lactate. Its pathway is amino-sugar metabolism; 1,6-anhydro-N-acetylmuramate degradation. The protein operates within amino-sugar metabolism; N-acetylmuramate degradation. It functions in the pathway cell wall biogenesis; peptidoglycan recycling. Specifically catalyzes the cleavage of the D-lactyl ether substituent of MurNAc 6-phosphate, producing GlcNAc 6-phosphate and D-lactate. Together with AnmK, is also required for the utilization of anhydro-N-acetylmuramic acid (anhMurNAc) either imported from the medium or derived from its own cell wall murein, and thus plays a role in cell wall recycling. This Vibrio vulnificus (strain CMCP6) protein is N-acetylmuramic acid 6-phosphate etherase.